A 113-amino-acid polypeptide reads, in one-letter code: UPF0482 protein YnfB (113 aa).

Residues 1 to 28 (MKITLSKRIGLLAFLLPCALALSTTVHA) form the signal peptide.

The protein belongs to the UPF0482 family.

This chain is UPF0482 protein YnfB, found in Shigella flexneri serotype 5b (strain 8401).